The primary structure comprises 506 residues: Zinc finger and SCAN domain containing protein 4C (506 aa).

Residues 1–24 form a disordered region; sequence MASQQAPAKDLQTNNLEFTPTDSS. Residues 37-119 enclose the SCAN box domain; the sequence is SAQLNFSPSN…RFMESLTDEC (83 aa). C2H2-type zinc fingers lie at residues 395 to 417, 424 to 446, 452 to 474, and 480 to 503; these read YKCE…QRTH, LLCV…EIIH, FKCS…EMIH, and YVCS…RNYH.

Embryonic stem (ES) cell-specific. Expressed in only 5% of ES cells at a given time, but nearly all ES cells express it at least once during 9 passages.

The protein resides in the nucleus. It localises to the chromosome. Its subcellular location is the telomere. Functionally, embryonic stem (ES) cell-specific transcription factor required to regulate ES cell pluripotency. Binds telomeres and plays a key role in genomic stability in ES cells by regulating telomere elongation. Acts as an activator of spontaneous telomere sister chromatid exchange (T-SCE) and telomere elongation in undifferentiated ES cells. This is Zinc finger and SCAN domain containing protein 4C (Zscan4c) from Mus musculus (Mouse).